The sequence spans 228 residues: Aquaporin Z (228 aa).

5 consecutive transmembrane segments (helical) span residues 1–21 (MLNK…GGCG), 46–66 (TVLT…NPAV), 82–102 (IPYW…LYVI), 129–149 (MMAG…IILG), and 154–174 (LAPA…IHLV). The NPA 1 signature appears at 63–65 (NPA). The short motif at 184-186 (NPA) is the NPA 2 element. The helical transmembrane segment at 205–225 (LFWVAPLVGAVIGAIIWKGLL) threads the bilayer.

The protein belongs to the MIP/aquaporin (TC 1.A.8) family. Homotetramer.

It is found in the cell inner membrane. It carries out the reaction H2O(in) = H2O(out). Channel that permits osmotically driven movement of water in both directions. It is involved in the osmoregulation and in the maintenance of cell turgor during volume expansion in rapidly growing cells. It mediates rapid entry or exit of water in response to abrupt changes in osmolarity. In Brucella suis biovar 1 (strain 1330), this protein is Aquaporin Z.